The primary structure comprises 404 residues: Probable glucan endo-1,6-beta-glucosidase B (404 aa).

The signal sequence occupies residues 1 to 20 (MTTYQTLFLIPLAISTLVTA). Residues Asn33 and Asn130 are each glycosylated (N-linked (GlcNAc...) asparagine). Catalysis depends on Glu222, which acts as the Proton donor. Asn253 and Asn299 each carry an N-linked (GlcNAc...) asparagine glycan. The Nucleophile role is filled by Glu324.

This sequence belongs to the glycosyl hydrolase 5 (cellulase A) family.

The protein localises to the secreted. The catalysed reaction is Random hydrolysis of (1-&gt;6)-linkages in (1-&gt;6)-beta-D-glucans.. Its function is as follows. Beta-glucanases participate in the metabolism of beta-glucan, the main structural component of the cell wall. Acts on lutean, pustulan and 1,6-oligo-beta-D-glucosides. The polypeptide is Probable glucan endo-1,6-beta-glucosidase B (exgB) (Aspergillus terreus (strain NIH 2624 / FGSC A1156)).